A 435-amino-acid chain; its full sequence is Zinc finger and BTB domain-containing protein 25 (435 aa).

The 107-residue stretch at 1-107 (MDTASHSLVL…GIRFLHADYL (107 aa)) folds into the BTB domain. Residues K142, K148, K198, and K204 each participate in a glycyl lysine isopeptide (Lys-Gly) (interchain with G-Cter in SUMO2) cross-link. A C2H2-type 1 zinc finger spans residues 238–260 (HLCHYCGERFDSRSNLRQHLHTH). Glycyl lysine isopeptide (Lys-Gly) (interchain with G-Cter in SUMO2) cross-links involve residues K303 and K330. A C2H2-type 2 zinc finger spans residues 349-371 (MSCTICGHKFPRKSQLLEHMYTH). K405 participates in a covalent cross-link: Glycyl lysine isopeptide (Lys-Gly) (interchain with G-Cter in SUMO2).

Expressed mainly in hematopoietic cells and testis.

Its subcellular location is the nucleus. Its function is as follows. May be involved in transcriptional regulation. This is Zinc finger and BTB domain-containing protein 25 (ZBTB25) from Homo sapiens (Human).